The sequence spans 71 residues: Brevinin-1HN1 (71 aa).

Positions 1 to 22 (MFTSKKPLLLLFFLGTINLSLC) are cleaved as a signal peptide. Residues 23-45 (EQERDADEEERRDDPDERDVEVE) constitute a propeptide that is removed on maturation. Cysteine 65 and cysteine 71 are joined by a disulfide.

As to expression, expressed by the skin glands.

It localises to the secreted. In terms of biological role, has antimicrobial activity against Gram-positive bacteria and fungi but has weak or no activity against a range of Gram-negative bacteria except P.faecalis. Active against the Gram-positive bacteria E.faecium 091299 (MIC=19 uM), E.faecalis 981 (MIC=19 uM), S.aureus ATCC 25923 (MIC=1.2 uM), S.carnosus KHS (MIC=4.8 uM), B.licheniformis X39 (MIC=2.4 uM) and R.rhodochrous X15 (MIC=1.2 uM). Active against the Gram-negative bacterium P.faecalis X29 (MIC=4.8 uM), is virtually inactive against E.coli ATCC 25922 (MIC=150 uM) and inactive against P.aeruginosa and S.typhi. Has antifungal activity against C.albicans ATCC 2002 (MIC=2.4 uM) and is also active against the slime mold 090223 (MIC=1.2 uM). Has low hemolytic activity against human erythrocytes (LC(50)=75 uM). The sequence is that of Brevinin-1HN1 from Odorrana hainanensis (Odor frog).